The following is a 355-amino-acid chain: Chromosomal protein D1 (355 aa).

Met-1 carries the post-translational modification N-acetylmethionine. A disordered region spans residues 1-355 (MEEVAVKKRG…NYNDSESVAA (355 aa)). The segment at residues 7-14 (KKRGRPSK) is a DNA-binding region (a.T hook 1). Ser-30 bears the Phosphoserine mark. 2 consecutive DNA-binding regions (a.T hook) follow at residues 34-41 (KKRGRPAK) and 60-67 (KIQNDEDP). Acidic residues predominate over residues 64-77 (DEDPEDEGEEDGDG). Residues Ser-80, Ser-88, and Ser-89 each carry the phosphoserine modification. The a.T hook 4 DNA-binding region spans 94-101 (KGRGRPKS). 3 positions are modified to phosphoserine: Ser-107, Ser-109, and Ser-112. Thr-115 carries the phosphothreonine modification. Ser-118 bears the Phosphoserine mark. The segment covering 119 to 130 (AKKRKAGRPKKH) has biased composition (basic residues). A DNA-binding region (a.T hook 5) is located at residues 122 to 129 (RKAGRPKK). Phosphoserine; by CK2 occurs at positions 133 and 135. A compositionally biased stretch (acidic residues) spans 135-147 (SENEDDQDEDDDG). A phosphoserine mark is found at Ser-149, Ser-150, Ser-161, Ser-164, and Ser-170. The segment at residues 155–162 (RPVGRPSA) is a DNA-binding region (a.T hook 6). Positions 174–181 (RGLGRPKK) form a DNA-binding region, a.T hook 7. Ser-186 carries the phosphoserine; by CK2 modification. The a.T hook 8 DNA-binding region spans 196 to 203 (KKRGRPPQ). Ser-208 is modified (phosphoserine). A DNA-binding region (a.T hook 9) is located at residues 219–226 (RPRGRPKA). Acidic residues predominate over residues 237–247 (NDDDQDDENSG). A phosphoserine mark is found at Ser-246, Ser-252, and Ser-253. 2 consecutive DNA-binding regions (a.T hook) follow at residues 262–269 (KKRGRPSL) and 281–288 (KPRSRPAK). Ser-299 and Ser-307 each carry phosphoserine. Residues 307-318 (SKKESNDEDRAV) are compositionally biased toward basic and acidic residues. At Ser-311 the chain carries Phosphoserine; by CK2. Residue Thr-321 is modified to Phosphothreonine. Residue Ser-332 is modified to Phosphoserine; by CK2. A compositionally biased stretch (polar residues) spans 345 to 355 (DNYNDSESVAA).

It localises to the nucleus. The protein localises to the chromosome. This satellite DNA-associated protein is a double-stranded DNA binding protein specific for tracts of pure at DNA. It may play a role in organizing the higher-order structure of euchromatin as well as heterochromatin. The protein is Chromosomal protein D1 (D1) of Drosophila melanogaster (Fruit fly).